A 1016-amino-acid chain; its full sequence is EMILIN-1 (1016 aa).

An N-terminal signal peptide occupies residues 1-21 (MAPRTLWSCYLCCLLTAAAGA). One can recognise an EMI domain in the interval 56-131 (HRNWCAYVVT…QGYGGDDCAE (76 aa)). Intrachain disulfides connect C60–C121, C85–C92, and C120–C129. Residues 135 to 182 (PALGPASSTPRPLARPARPNLSGSSAGSPLSGLGGEGPGESEKVQQLE) are disordered. Residues 139–165 (PASSTPRPLARPARPNLSGSSAGSPLS) show a composition bias toward low complexity. N154 carries an N-linked (GlcNAc...) asparagine glycan. The stretch at 216 to 256 (TAFNGRQQPADAAARPGVHETLNEIQHQLQLLDTRVSTHDQ) forms a coiled coil. Disordered stretches follow at residues 257–288 (ELGHLNNHHGGSSSSGGSRAPAPASAPPGPSE) and 383–402 (RGTELGGAAGQGGHPPGYTS). Residues 266–279 (GGSSSSGGSRAPAP) are compositionally biased toward low complexity. Positions 356–420 (PELGRRLAEL…EDRFNSTLGP (65 aa)) form a coiled coil. Positions 386-397 (ELGGAAGQGGHP) are enriched in gly residues. N415 carries an N-linked (GlcNAc...) asparagine glycan. Residues 416-435 (STLGPSEEQEESWPGAPGGL) are disordered. N-linked (GlcNAc...) asparagine glycosylation is found at N455 and N561. Positions 576-603 (AHGDEGCGACGGVQEELGRLRDGVERCS) form a coiled coil. Residue N658 is glycosylated (N-linked (GlcNAc...) asparagine). A coiled-coil region spans residues 685–752 (IISEINRLQQ…GLQGLREGLS (68 aa)). Residues N766 and N794 are each glycosylated (N-linked (GlcNAc...) asparagine). Disordered regions lie at residues 811–863 (DLTG…VEGA) and 942–961 (RVDSGGYEPEGLENKPVAES). Residues 814–864 (GPAGEAGPPGPPGLQGPPGPAGPPGSPGKDGQEGPIGPPGPQGEQGVEGAP) form the Collagen-like domain. The segment covering 821–839 (PPGPPGLQGPPGPAGPPGS) has biased composition (pro residues). Residues 835-857 (GPPGSPGKDGQEGPIGPPGPQGE) are a coiled coil. The C1q domain occupies 866–1013 (APVPQVAFSA…GALLYGDPEL (148 aa)).

As to quaternary structure, homotrimer associated through a moderately stable interaction of the C-terminal globular C1q domains, allowing the nucleation of the triple helix and then a further quaternary assembly to higher-order polymers via intermolecular disulfide bonds. Interacts with EMILIN2. Interacts with EFEMP2; this interaction promotes the incorporation of EFEMP2 into the extracellular matrix. In terms of tissue distribution, distributed in tissues where resilience and elastic recoil are prominent. Highest levels in the adult small intestine, aorta, lung, uterus, and appendix and in the fetal spleen, kidney, lung, and heart; intermediate expression was detected in adult liver, ovary, colon, stomach, lymph node and spleen; adult heart, bladder, prostate, adrenal gland, mammary gland, placenta and kidney showed low expression whereas a series of other adult tissues, including skeletal muscle and different regions of adult brain show no expression. Detected in intramuscular nerve bundles, where it particularly localizes in the epineurium, the most external layer of dense connective tissue enclosing the nerve.

It localises to the secreted. It is found in the extracellular space. The protein resides in the extracellular matrix. In terms of biological role, involved in elastic and collagen fibers formation. It is required for EFEMP2 deposition into the extracellular matrix, and collagen network assembly and cross-linking via protein-lysine 6-oxidase/LOX activity. May be responsible for anchoring smooth muscle cells to elastic fibers, and may be involved in the processes that regulate vessel assembly. Has cell adhesive capacity. This chain is EMILIN-1 (EMILIN1), found in Homo sapiens (Human).